A 330-amino-acid polypeptide reads, in one-letter code: PDZ and LIM domain protein 4 (330 aa).

One can recognise a PDZ domain in the interval 1 to 84 (MPHSVTLRGP…HLTLSVSRPE (84 aa)). The tract at residues 104–180 (IDPEIQDGSP…DPARGLPRSR (77 aa)) is disordered. Low complexity predominate over residues 111–121 (GSPTTSRRPSG). Residues S112, S116, S120, and S135 each carry the phosphoserine modification. A compositionally biased stretch (polar residues) spans 148-163 (NGSSEATLPAQMSTLH). Residues 253–312 (PECTRCGHGIVGTIVKARDKLYHPECFMCSDCGLNLKQRGYFFLDERLYCESHAKARVKP) enclose the LIM zinc-binding domain.

In terms of assembly, homodimer. Interacts with PTPN13. Interacts (via C-terminus only or via combined C-terminus and LIM domain, but not LIM domain only) with PTPN13 (via the second or fourth PDZ domains). Found in a complex with PTPN13 and TRIP6. Interacts (via PDZ domain) with ACTN1 and ACTN2 (via C-terminal SDL residues). Interacts (via PDZ domain) with TRIP6 (via the second LIM domain or via the third LIM domain plus C-terminus). Interacts (via LIM domain) with GRIA1 (via C-terminus); this interaction as well as the interaction with alpha-actinin is required for their colocalization in early endosomes. Interacts with PDLIM1. Forms (via LIM domain) a heterodimer with PDLIM3. Interacts directly with SRC (via kinase domain and to a lesser extent the SH2 domain). Isoform 2 interacts with NQO1. NQO1-stabilized isoform 2 heterodimerizes with isoform 1. Post-translationally, phosphorylated on tyrosine residue(s). Can be dephosphorylated by PTPN13. Found in brain.

The protein localises to the cytoplasm. It is found in the cytoskeleton. Its subcellular location is the nucleus. It localises to the perinuclear region. The protein resides in the cell projection. The protein localises to the lamellipodium. It is found in the dendritic spine. Its subcellular location is the early endosome membrane. It localises to the recycling endosome membrane. The protein resides in the synapse. The protein localises to the synaptosome. Its function is as follows. Suppresses SRC activation by recognizing and binding to active SRC and facilitating PTPN13-mediated dephosphorylation of SRC 'Tyr-419' leading to its inactivation. Inactivated SRC dissociates from this protein allowing the initiation of a new SRC inactivation cycle. Involved in reorganization of the actin cytoskeleton. In nonmuscle cells, binds to ACTN1 (alpha-actinin-1), increases the affinity of ACTN1 to F-actin (filamentous actin), and promotes formation of actin stress fibers. Involved in regulation of the synaptic AMPA receptor transport in dendritic spines of hippocampal pyramidal neurons directing the receptors toward an insertion at the postsynaptic membrane. Links endosomal surface-internalized GRIA1-containing AMPA receptors to the alpha-actinin/actin cytoskeleton. Increases AMPA receptor-mediated excitatory postsynaptic currents in neurons. Involved in reorganization of the actin cytoskeleton and in regulation of cell migration. In response to oxidative stress, binds to NQO1, which stabilizes it and protects it from ubiquitin-independent degradation by the core 20S proteasome. Stabilized protein is able to heterodimerize with isoform 1 changing the subcellular location of it from cytoskeleton and nuclei to cytosol, leading to loss of isoforms 1 ability to induce formation of actin stress fibers. Counteracts the effects produced by isoform 1 on organization of actin cytoskeleton and cell motility to fine-tune actin cytoskeleton rearrangement and to attenuate cell migration. The chain is PDZ and LIM domain protein 4 (PDLIM4) from Homo sapiens (Human).